The sequence spans 209 residues: Small ribosomal subunit protein uS4 (209 aa).

Positions 22–45 (RGRNPLLRKPNPPGQHGMQRKKKS) are disordered. The 62-residue stretch at 93–154 (CRLDSIVYRL…KSKRLAIVTE (62 aa)) folds into the S4 RNA-binding domain.

Belongs to the universal ribosomal protein uS4 family. Part of the 30S ribosomal subunit. Contacts protein S5. The interaction surface between S4 and S5 is involved in control of translational fidelity.

Its function is as follows. One of the primary rRNA binding proteins, it binds directly to 16S rRNA where it nucleates assembly of the body of the 30S subunit. Functionally, with S5 and S12 plays an important role in translational accuracy. The protein is Small ribosomal subunit protein uS4 of Chlamydia trachomatis serovar L2 (strain ATCC VR-902B / DSM 19102 / 434/Bu).